The primary structure comprises 146 residues: MDVKILDARLRDQLPHYATPGAAGLDLRACIDAPITLAPGETRLVPTGMAIHLADPGYAALILPRSGLGHKHGIVLGNLVGLIDSDYQGQLMVSAWNRSEQSFELVPLERLAQLVIVPVVQARFNIVEAFETTARGEGGFGSTGRQ.

Substrate is bound by residues 65-67 (RSG), Asn-78, 82-84 (LID), and Met-92.

Belongs to the dUTPase family. Mg(2+) serves as cofactor.

It catalyses the reaction dUTP + H2O = dUMP + diphosphate + H(+). The protein operates within pyrimidine metabolism; dUMP biosynthesis; dUMP from dCTP (dUTP route): step 2/2. Functionally, this enzyme is involved in nucleotide metabolism: it produces dUMP, the immediate precursor of thymidine nucleotides and it decreases the intracellular concentration of dUTP so that uracil cannot be incorporated into DNA. In Thiobacillus denitrificans (strain ATCC 25259 / T1), this protein is Deoxyuridine 5'-triphosphate nucleotidohydrolase.